Reading from the N-terminus, the 235-residue chain is Hydroxyacylglutathione hydrolase (235 aa).

Positions 53, 55, 57, 58, 109, 127, and 165 each coordinate Zn(2+).

This sequence belongs to the metallo-beta-lactamase superfamily. Glyoxalase II family. Monomer. Zn(2+) is required as a cofactor.

The catalysed reaction is an S-(2-hydroxyacyl)glutathione + H2O = a 2-hydroxy carboxylate + glutathione + H(+). It functions in the pathway secondary metabolite metabolism; methylglyoxal degradation; (R)-lactate from methylglyoxal: step 2/2. In terms of biological role, thiolesterase that catalyzes the hydrolysis of S-D-lactoyl-glutathione to form glutathione and D-lactic acid. The sequence is that of Hydroxyacylglutathione hydrolase from Actinobacillus pleuropneumoniae serotype 7 (strain AP76).